The following is a 483-amino-acid chain: Aspartyl/glutamyl-tRNA(Asn/Gln) amidotransferase subunit B (483 aa).

It belongs to the GatB/GatE family. GatB subfamily. In terms of assembly, heterotrimer of A, B and C subunits.

It catalyses the reaction L-glutamyl-tRNA(Gln) + L-glutamine + ATP + H2O = L-glutaminyl-tRNA(Gln) + L-glutamate + ADP + phosphate + H(+). It carries out the reaction L-aspartyl-tRNA(Asn) + L-glutamine + ATP + H2O = L-asparaginyl-tRNA(Asn) + L-glutamate + ADP + phosphate + 2 H(+). Its function is as follows. Allows the formation of correctly charged Asn-tRNA(Asn) or Gln-tRNA(Gln) through the transamidation of misacylated Asp-tRNA(Asn) or Glu-tRNA(Gln) in organisms which lack either or both of asparaginyl-tRNA or glutaminyl-tRNA synthetases. The reaction takes place in the presence of glutamine and ATP through an activated phospho-Asp-tRNA(Asn) or phospho-Glu-tRNA(Gln). This Rickettsia canadensis (strain McKiel) protein is Aspartyl/glutamyl-tRNA(Asn/Gln) amidotransferase subunit B.